A 211-amino-acid polypeptide reads, in one-letter code: Guanylate kinase (211 aa).

The Guanylate kinase-like domain maps to 5–184; sequence GLLIVFSGPS…AAERVKRIIE (180 aa). 12-19 contacts ATP; it reads GPSGVGKG.

It belongs to the guanylate kinase family.

The protein resides in the cytoplasm. It catalyses the reaction GMP + ATP = GDP + ADP. In terms of biological role, essential for recycling GMP and indirectly, cGMP. The sequence is that of Guanylate kinase from Streptococcus pyogenes serotype M3 (strain SSI-1).